A 50-amino-acid chain; its full sequence is Toxic protein HokC (50 aa).

Over 1–5 (MKQHK) the chain is Cytoplasmic. A helical; Signal-anchor for type II membrane protein transmembrane segment spans residues 6–24 (AMIVALIVICITAVVAALV). The Periplasmic segment spans residues 25-50 (TRKDLCEVHIRTGQTEVAVFTAYESE).

This sequence belongs to the Hok/Gef family. As to quaternary structure, homodimer; disulfide-linked.

It is found in the cell inner membrane. Toxic component of a type I toxin-antitoxin (TA) system. When overexpressed kills cells within minutes; causes collapse of the transmembrane potential and arrest of respiration. Its toxic effect is probably neutralized by antisense antitoxin RNA SokC. The protein is Toxic protein HokC of Escherichia coli (strain K12).